Reading from the N-terminus, the 532-residue chain is Apolipoprotein N-acyltransferase (532 aa).

6 helical membrane passes run 37-57 (IFVA…GAIA), 75-95 (WWFG…ALLV), 106-126 (LAVL…AMIA), 128-148 (LLWS…ALAE), 179-199 (VIGL…PALL), and 207-227 (TGIG…AWTL). Residues 245–494 (VQPSIAQAMK…VGVVDSYLPS (250 aa)) form the CN hydrolase domain. The active-site Proton acceptor is the E289. K353 is an active-site residue. C406 (nucleophile) is an active-site residue. The chain crosses the membrane as a helical span at residues 505-525 (GWIQTVLILLTLLAASVGLIL).

Belongs to the CN hydrolase family. Apolipoprotein N-acyltransferase subfamily.

Its subcellular location is the cell inner membrane. It carries out the reaction N-terminal S-1,2-diacyl-sn-glyceryl-L-cysteinyl-[lipoprotein] + a glycerophospholipid = N-acyl-S-1,2-diacyl-sn-glyceryl-L-cysteinyl-[lipoprotein] + a 2-acyl-sn-glycero-3-phospholipid + H(+). It participates in protein modification; lipoprotein biosynthesis (N-acyl transfer). Functionally, catalyzes the phospholipid dependent N-acylation of the N-terminal cysteine of apolipoprotein, the last step in lipoprotein maturation. This chain is Apolipoprotein N-acyltransferase, found in Brucella suis biovar 1 (strain 1330).